A 378-amino-acid chain; its full sequence is Alpha-D-ribose 1-methylphosphonate 5-triphosphate diphosphatase (378 aa).

This sequence belongs to the metallo-dependent hydrolases superfamily.

The enzyme catalyses alpha-D-ribose 1-methylphosphonate 5-triphosphate + H2O = alpha-D-ribose 1-methylphosphonate 5-phosphate + diphosphate + H(+). Functionally, catalyzes the hydrolysis of alpha-D-ribose 1-methylphosphonate triphosphate (RPnTP) to form alpha-D-ribose 1-methylphosphonate phosphate (PRPn) and diphosphate. This chain is Alpha-D-ribose 1-methylphosphonate 5-triphosphate diphosphatase (phnM), found in Escherichia coli (strain K12).